We begin with the raw amino-acid sequence, 115 residues long: T cell receptor beta variable 11-3 (115 aa).

The signal sequence occupies residues 1–21 (MGTRLLCWVAFCLLVEELIEA). The 94-residue stretch at 22–115 (GVVQSPRYKI…SAVYLCASSL (94 aa)) folds into the Ig-like domain. Cysteine 42 and cysteine 111 form a disulfide bridge.

In terms of assembly, alpha-beta TR is a heterodimer composed of an alpha and beta chain; disulfide-linked. The alpha-beta TR is associated with the transmembrane signaling CD3 coreceptor proteins to form the TR-CD3 (TcR or TCR). The assembly of alpha-beta TR heterodimers with CD3 occurs in the endoplasmic reticulum where a single alpha-beta TR heterodimer associates with one CD3D-CD3E heterodimer, one CD3G-CD3E heterodimer and one CD247 homodimer forming a stable octameric structure. CD3D-CD3E and CD3G-CD3E heterodimers preferentially associate with TR alpha and TR beta chains, respectively. The association of the CD247 homodimer is the last step of TcR assembly in the endoplasmic reticulum and is required for transport to the cell surface.

It is found in the cell membrane. Functionally, v region of the variable domain of T cell receptor (TR) beta chain that participates in the antigen recognition. Alpha-beta T cell receptors are antigen specific receptors which are essential to the immune response and are present on the cell surface of T lymphocytes. Recognize peptide-major histocompatibility (MH) (pMH) complexes that are displayed by antigen presenting cells (APC), a prerequisite for efficient T cell adaptive immunity against pathogens. Binding of alpha-beta TR to pMH complex initiates TR-CD3 clustering on the cell surface and intracellular activation of LCK that phosphorylates the ITAM motifs of CD3G, CD3D, CD3E and CD247 enabling the recruitment of ZAP70. In turn ZAP70 phosphorylates LAT, which recruits numerous signaling molecules to form the LAT signalosome. The LAT signalosome propagates signal branching to three major signaling pathways, the calcium, the mitogen-activated protein kinase (MAPK) kinase and the nuclear factor NF-kappa-B (NF-kB) pathways, leading to the mobilization of transcription factors that are critical for gene expression and essential for T cell growth and differentiation. The T cell repertoire is generated in the thymus, by V-(D)-J rearrangement. This repertoire is then shaped by intrathymic selection events to generate a peripheral T cell pool of self-MH restricted, non-autoaggressive T cells. Post-thymic interaction of alpha-beta TR with the pMH complexes shapes TR structural and functional avidity. The protein is T cell receptor beta variable 11-3 of Homo sapiens (Human).